The primary structure comprises 83 residues: Mu-theraphotoxin-Hhn2j 2 (83 aa).

Residues 1–21 form the signal peptide; that stretch reads MKASMFLALAGLVLLFVVGYA. Residues 22–48 constitute a propeptide that is removed on maturation; that stretch reads SESEEKEFPIELLSKIFAVDVFKGEDR. Intrachain disulfides connect C50/C65, C57/C70, and C64/C77. The residue at position 81 (L81) is a Leucine amide.

This sequence belongs to the neurotoxin 10 (Hwtx-1) family. 15 (Hntx-3) subfamily. As to quaternary structure, monomer. In terms of tissue distribution, expressed by the venom gland.

It localises to the secreted. Its function is as follows. Lethal neurotoxin. Selectively blocks tetrodotoxin-sensitive voltage-gated sodium channels (Nav). Does not affect tetrodotoxin-resistant voltage-gated sodium channels or calcium channels. The polypeptide is Mu-theraphotoxin-Hhn2j 2 (Cyriopagopus hainanus (Chinese bird spider)).